Consider the following 134-residue polypeptide: Large ribosomal subunit protein uL16c (134 aa).

The protein belongs to the universal ribosomal protein uL16 family. Part of the 50S ribosomal subunit.

Its subcellular location is the plastid. It localises to the chloroplast. The sequence is that of Large ribosomal subunit protein uL16c from Nephroselmis olivacea (Green alga).